We begin with the raw amino-acid sequence, 414 residues long: Aspartic protease-like protein pynH (414 aa).

The first 19 residues, 1-19 (MFPCSRIWSLLVAAATASA), serve as a signal peptide directing secretion. Positions 43-410 (FLTDIALGTP…DFEKLQVGIA (368 aa)) constitute a Peptidase A1 domain. Residues asparagine 93, asparagine 102, asparagine 140, asparagine 151, asparagine 173, asparagine 202, asparagine 221, asparagine 258, asparagine 272, asparagine 335, and asparagine 366 are each glycosylated (N-linked (GlcNAc...) asparagine). Cysteine 333 and cysteine 371 form a disulfide bridge.

This sequence belongs to the peptidase A1 family.

It participates in secondary metabolite biosynthesis. Functionally, aspartic protease-like protein; part of the gene cluster that mediates the biosynthesis of pyranonigrins, a family of antioxidative compounds. The first step of pyranonigrins biosynthesis is performed by the hybrid PKS-NRPS synthetase that condenses 6 malonyl-CoA units to an acetyl starter unit, to form a 1,3,5-trioxotetradecane-6,8-dienyl-ACP. The enoyl reductase (ER) domain of pynA is likely to be functional during the first two rounds of polyketide chain extension, to generate the saturated C-C bonds of the alkyl side chain. PynA subsequently forms the amide bond between the acyl chain and L-serine. Although pynA has a terminal reductase domain, it appears to require the thioesterase pynI for the release of the straight-chain intermediate from pynA via the formation of a tetramic acid pyranonigrin J. The methyltransferase pynC then coverts pyranonigrin J to pyranonigrin I via N-methylation. The FAD-dependent monooxygenase pynG catalyzes an epoxidation-mediated cyclization to form the dihydro-gamma-pyrone moiety, followed by pynD-catalyzed oxidation of the alcohol to the ketone and enolization to yield the characteristic tetramic acid-fused gamma-pyrone core of pyranonigrin H. Pyranonigrin H is substrate of pynH for dehydration-mediated exo-methylene formation from the serine side chain to produce pyranonigrin E, before the oxidase pynE reduces the exo-methylene of pyranonigrin E into a pendant methyl to form pyranonigrin G. The FAD-linked oxidoreductase pynB performs the reverse reaction and converts pyranonigrin G back to pyranonigrin E. The chain is Aspartic protease-like protein pynH from Aspergillus niger (strain ATCC MYA-4892 / CBS 513.88 / FGSC A1513).